Reading from the N-terminus, the 161-residue chain is Phosphopantetheine adenylyltransferase (161 aa).

A substrate-binding site is contributed by Thr9. Residues 9 to 10 (TF) and His17 contribute to the ATP site. The substrate site is built by Lys41, Leu73, and Arg87. ATP is bound by residues 88-90 (GLR), Glu98, and 123-129 (LSYISST).

Belongs to the bacterial CoaD family. In terms of assembly, homohexamer. The cofactor is Mg(2+).

It is found in the cytoplasm. The enzyme catalyses (R)-4'-phosphopantetheine + ATP + H(+) = 3'-dephospho-CoA + diphosphate. It functions in the pathway cofactor biosynthesis; coenzyme A biosynthesis; CoA from (R)-pantothenate: step 4/5. Its function is as follows. Reversibly transfers an adenylyl group from ATP to 4'-phosphopantetheine, yielding dephospho-CoA (dPCoA) and pyrophosphate. This Hahella chejuensis (strain KCTC 2396) protein is Phosphopantetheine adenylyltransferase.